Consider the following 122-residue polypeptide: Large ribosomal subunit protein bL12 (122 aa).

Belongs to the bacterial ribosomal protein bL12 family. As to quaternary structure, homodimer. Part of the ribosomal stalk of the 50S ribosomal subunit. Forms a multimeric L10(L12)X complex, where L10 forms an elongated spine to which 2 to 4 L12 dimers bind in a sequential fashion. Binds GTP-bound translation factors.

Functionally, forms part of the ribosomal stalk which helps the ribosome interact with GTP-bound translation factors. Is thus essential for accurate translation. The polypeptide is Large ribosomal subunit protein bL12 (Streptococcus mutans serotype c (strain ATCC 700610 / UA159)).